A 279-amino-acid chain; its full sequence is MLVQSRTLVTAILSCSLVFGTTVNGASVAIAQENVPMAALYEPDYESLETRLGSINNDAGLPNSVSQTVENFAELPEGTRFVLDSDTFAVAVSDGVVTSRLDSQTGVIRHTFGGAGTISYNPGEVTRSYIDRVTVRVVYPDSSIDIVTPHSVVEVSDSFYYSVQSIDSQRVRNGQSIKVPMTVIAGDGAIGGVPQGAKVVRDRYGSVEDAELMGATIVIDEKTGELTFTAPEDRTGQMWFAAELIYPDGTYSEVHYLFEVTDKSVQDDSVPFFGSSLSS.

The N-terminal stretch at 1–31 (MLVQSRTLVTAILSCSLVFGTTVNGASVAIA) is a signal peptide.

This is an uncharacterized protein from Corynebacterium glutamicum (strain ATCC 13032 / DSM 20300 / JCM 1318 / BCRC 11384 / CCUG 27702 / LMG 3730 / NBRC 12168 / NCIMB 10025 / NRRL B-2784 / 534).